We begin with the raw amino-acid sequence, 254 residues long: Alcohol dehydrogenase (254 aa).

10 to 33 (FVAGLGGIGLDTSREIVKSGPKNL) is an NAD(+) binding site. Position 138 (serine 138) interacts with substrate. Catalysis depends on tyrosine 151, which acts as the Proton acceptor.

The protein belongs to the short-chain dehydrogenases/reductases (SDR) family. In terms of assembly, homodimer.

It catalyses the reaction a primary alcohol + NAD(+) = an aldehyde + NADH + H(+). The enzyme catalyses a secondary alcohol + NAD(+) = a ketone + NADH + H(+). This Drosophila borealis (Fruit fly) protein is Alcohol dehydrogenase (Adh).